Here is a 125-residue protein sequence, read N- to C-terminus: Small ribosomal subunit protein uS12c (125 aa).

It belongs to the universal ribosomal protein uS12 family. Part of the 30S ribosomal subunit.

The protein localises to the plastid. Its subcellular location is the chloroplast. In terms of biological role, with S4 and S5 plays an important role in translational accuracy. Located at the interface of the 30S and 50S subunits. This Oltmannsiellopsis viridis (Marine flagellate) protein is Small ribosomal subunit protein uS12c (rps12).